A 210-amino-acid chain; its full sequence is Probable nicotinate-nucleotide adenylyltransferase (210 aa).

Belongs to the NadD family.

The enzyme catalyses nicotinate beta-D-ribonucleotide + ATP + H(+) = deamido-NAD(+) + diphosphate. It functions in the pathway cofactor biosynthesis; NAD(+) biosynthesis; deamido-NAD(+) from nicotinate D-ribonucleotide: step 1/1. In terms of biological role, catalyzes the reversible adenylation of nicotinate mononucleotide (NaMN) to nicotinic acid adenine dinucleotide (NaAD). The polypeptide is Probable nicotinate-nucleotide adenylyltransferase (Streptococcus pyogenes serotype M6 (strain ATCC BAA-946 / MGAS10394)).